The primary structure comprises 510 residues: MSAKKPMALVILDGWGYREDNANNAINNARTPVMDSLMANNPHTLISASGMDVGLPDGQMGNSEVGHTNIGAGRIVYQDLTRITKAIMDGEFQHNKVLVAAIDKAVAAGKAVHLMGLMSPGGVHSHEDHIYAAVEMAAARGAEKIYLHCFLDGRDTPPRSAEASLKRFQDLFAKLGKGRIASIVGRYYAMDRDNNWDRVEKAYDLLTLAQGEFTYDSAVEALQAAYAREENDEFVKATEIRAAGQESAAMQDGDALLFMNYRADRARQITRTFVPDFAGFSRKAFPALDFVMLTQYAADIPLQCAFGPASLENTYGEWLSKAGKTQLRISETEKYAHVTFFFNGGVENEFPGEERQLVASPKVATYDLQPEMSSKELTDKLVAAIKSGKYDAIICNYPNGDMVGHTGVYEAAVKACEAVDECIGRVVEAIKEVDGQLLITADHGNAEMMIDPETGGVHTAHTSLPVPLIYVGNKAISLKEGGKLSDLAPTMLALSDLDIPADMSGQVLYS.

Residues Asp13 and Ser63 each coordinate Mn(2+). The active-site Phosphoserine intermediate is Ser63. Residues His124, 154 to 155, Arg186, Arg192, 262 to 265, and Lys334 contribute to the substrate site; these read RD and RADR. Mn(2+) contacts are provided by Asp401, His405, Asp442, His443, and His461.

It belongs to the BPG-independent phosphoglycerate mutase family. Monomer. It depends on Mn(2+) as a cofactor.

It carries out the reaction (2R)-2-phosphoglycerate = (2R)-3-phosphoglycerate. Its pathway is carbohydrate degradation; glycolysis; pyruvate from D-glyceraldehyde 3-phosphate: step 3/5. Its function is as follows. Catalyzes the interconversion of 2-phosphoglycerate and 3-phosphoglycerate. This chain is 2,3-bisphosphoglycerate-independent phosphoglycerate mutase, found in Vibrio cholerae serotype O1 (strain ATCC 39541 / Classical Ogawa 395 / O395).